We begin with the raw amino-acid sequence, 387 residues long: Succinate--CoA ligase [ADP-forming] subunit beta (387 aa).

One can recognise an ATP-grasp domain in the interval 9–236; it reads KGLFAKHNVP…RAATDPLELK (228 aa). ATP is bound by residues Lys-45, 52 to 54, Ser-94, and Glu-99; that span reads GRG. Mg(2+)-binding residues include Asn-191 and Asp-205. Residues Asn-256 and 318 to 320 contribute to the substrate site; that span reads GIT.

It belongs to the succinate/malate CoA ligase beta subunit family. As to quaternary structure, heterotetramer of two alpha and two beta subunits. It depends on Mg(2+) as a cofactor.

The catalysed reaction is succinate + ATP + CoA = succinyl-CoA + ADP + phosphate. It catalyses the reaction GTP + succinate + CoA = succinyl-CoA + GDP + phosphate. Its pathway is carbohydrate metabolism; tricarboxylic acid cycle; succinate from succinyl-CoA (ligase route): step 1/1. Its function is as follows. Succinyl-CoA synthetase functions in the citric acid cycle (TCA), coupling the hydrolysis of succinyl-CoA to the synthesis of either ATP or GTP and thus represents the only step of substrate-level phosphorylation in the TCA. The beta subunit provides nucleotide specificity of the enzyme and binds the substrate succinate, while the binding sites for coenzyme A and phosphate are found in the alpha subunit. This Mycobacterium ulcerans (strain Agy99) protein is Succinate--CoA ligase [ADP-forming] subunit beta.